Consider the following 198-residue polypeptide: Nucleoplasmin (198 aa).

The segment at 35–38 (SDED) is acidic tract A1. The segment covering 125-145 (SWAEEEGEEEVEEEEEEEDPE) has biased composition (acidic residues). The segment at 125–198 (SWAEEEGEEE…GRGRKPAAKK (74 aa)) is disordered. The acidic tract A2 stretch occupies residues 128-145 (EEEGEEEVEEEEEEEDPE). A compositionally biased stretch (basic residues) spans 150 to 167 (AVKRPAASKKGSQAKKKK). Positions 152 to 167 (KRPAASKKGSQAKKKK) match the Bipartite nuclear localization signal motif. Positions 172–174 (EEE) are acidic tract A3. Basic residues predominate over residues 183–198 (KKGKGAGRGRKPAAKK).

The protein belongs to the nucleoplasmin family. As to quaternary structure, homopentamer. As to expression, expressed in oocytes.

It localises to the nucleus. In terms of biological role, acts as a chaperone for histones, such as histone H2A-H2B, and thus regulates the assembly of nucleosome cores. Involved in chromatin remodeling, especially during fertilization and early embryonic development. May be involved in sperm chromatin decondensation during fertilization. In Rhinella marina (Cane toad), this protein is Nucleoplasmin.